The chain runs to 630 residues: Pentatricopeptide repeat-containing protein At1g26460, mitochondrial (630 aa).

The N-terminal 115 residues, 1–115 (MASHLFTRSR…RALSETLDMN (115 aa)), are a transit peptide targeting the mitochondrion. The disordered stretch occupies residues 42 to 79 (LLATESTDHDPSNHQSTSTPLPPNPATGSPLYQENWRS). Over residues 67–77 (ATGSPLYQENW) the composition is skewed to polar residues. PPR repeat units follow at residues 154–189 (DVNL…SVEP), 190–224 (NTAS…GKDS), 227–261 (DDES…GYML), 468–503 (SVAA…GLTP), 504–538 (NIDS…GVKP), and 539–573 (DSRT…GFEP).

The protein belongs to the PPR family. P subfamily.

The protein localises to the mitochondrion. This is Pentatricopeptide repeat-containing protein At1g26460, mitochondrial from Arabidopsis thaliana (Mouse-ear cress).